A 542-amino-acid chain; its full sequence is Chaperonin GroEL (542 aa).

ATP contacts are provided by residues 29–32 (TLGP), 86–90 (DGTTT), G413, 476–478 (NAA), and D492. Residues 522 to 542 (PDENGPAAVPDMGMGGMGGMM) form a disordered region.

Belongs to the chaperonin (HSP60) family. As to quaternary structure, forms a cylinder of 14 subunits composed of two heptameric rings stacked back-to-back. Interacts with the co-chaperonin GroES.

It is found in the cytoplasm. It carries out the reaction ATP + H2O + a folded polypeptide = ADP + phosphate + an unfolded polypeptide.. Together with its co-chaperonin GroES, plays an essential role in assisting protein folding. The GroEL-GroES system forms a nano-cage that allows encapsulation of the non-native substrate proteins and provides a physical environment optimized to promote and accelerate protein folding. The protein is Chaperonin GroEL of Listeria monocytogenes serotype 4b (strain CLIP80459).